The primary structure comprises 454 residues: Methylenetetrahydrofolate--tRNA-(uracil-5-)-methyltransferase TrmFO (454 aa).

FAD is bound at residue 9 to 14; sequence GAGLAG. The tract at residues 432–454 is disordered; the sequence is LERVSPPSRETGEPTGAEQVDLA.

This sequence belongs to the MnmG family. TrmFO subfamily. It depends on FAD as a cofactor.

Its subcellular location is the cytoplasm. The catalysed reaction is uridine(54) in tRNA + (6R)-5,10-methylene-5,6,7,8-tetrahydrofolate + NADH + H(+) = 5-methyluridine(54) in tRNA + (6S)-5,6,7,8-tetrahydrofolate + NAD(+). It catalyses the reaction uridine(54) in tRNA + (6R)-5,10-methylene-5,6,7,8-tetrahydrofolate + NADPH + H(+) = 5-methyluridine(54) in tRNA + (6S)-5,6,7,8-tetrahydrofolate + NADP(+). Catalyzes the folate-dependent formation of 5-methyl-uridine at position 54 (M-5-U54) in all tRNAs. In Pelobacter propionicus (strain DSM 2379 / NBRC 103807 / OttBd1), this protein is Methylenetetrahydrofolate--tRNA-(uracil-5-)-methyltransferase TrmFO.